A 147-amino-acid polypeptide reads, in one-letter code: Cyanate hydratase (147 aa).

Catalysis depends on residues Arg88, Glu91, and Ser114.

It belongs to the cyanase family.

The enzyme catalyses cyanate + hydrogencarbonate + 3 H(+) = NH4(+) + 2 CO2. Its function is as follows. Catalyzes the reaction of cyanate with bicarbonate to produce ammonia and carbon dioxide. This Prochlorococcus marinus (strain NATL2A) protein is Cyanate hydratase.